The sequence spans 248 residues: Probable transcriptional regulatory protein Oant_1200 (248 aa).

It belongs to the TACO1 family.

The protein resides in the cytoplasm. The protein is Probable transcriptional regulatory protein Oant_1200 of Brucella anthropi (strain ATCC 49188 / DSM 6882 / CCUG 24695 / JCM 21032 / LMG 3331 / NBRC 15819 / NCTC 12168 / Alc 37) (Ochrobactrum anthropi).